Here is an 832-residue protein sequence, read N- to C-terminus: Elongation factor 2 (832 aa).

Residues 17–336 enclose the tr-type G domain; the sequence is HNIRNMSVIA…MIVTHLPSPA (320 aa). Residue 26–33 participates in GTP binding; it reads AHVDHGKS. A phosphothreonine mark is found at Thr57 and Thr59. GTP-binding positions include 152 to 155 and 207 to 209; these read NKVD and SGL. The tract at residues 580 to 608 is disordered; it reads AEPLPDGLTDDIEEGKVSPRDDPKERSNL. Residues 593-608 show a composition bias toward basic and acidic residues; that stretch reads EGKVSPRDDPKERSNL. A Diphthamide modification is found at His689.

Belongs to the TRAFAC class translation factor GTPase superfamily. Classic translation factor GTPase family. EF-G/EF-2 subfamily.

The protein resides in the cytoplasm. It catalyses the reaction GTP + H2O = GDP + phosphate + H(+). Catalyzes the GTP-dependent ribosomal translocation step during translation elongation. During this step, the ribosome changes from the pre-translocational (PRE) to the post-translocational (POST) state as the newly formed A-site-bound peptidyl-tRNA and P-site-bound deacylated tRNA move to the P and E sites, respectively. Catalyzes the coordinated movement of the two tRNA molecules, the mRNA and conformational changes in the ribosome. This chain is Elongation factor 2, found in Cryptosporidium parvum.